Consider the following 116-residue polypeptide: Ribosome-binding factor A (116 aa).

It belongs to the RbfA family. As to quaternary structure, monomer. Binds 30S ribosomal subunits, but not 50S ribosomal subunits or 70S ribosomes.

It is found in the cytoplasm. Its function is as follows. One of several proteins that assist in the late maturation steps of the functional core of the 30S ribosomal subunit. Associates with free 30S ribosomal subunits (but not with 30S subunits that are part of 70S ribosomes or polysomes). Required for efficient processing of 16S rRNA. May interact with the 5'-terminal helix region of 16S rRNA. The polypeptide is Ribosome-binding factor A (Streptococcus pneumoniae (strain Hungary19A-6)).